A 703-amino-acid polypeptide reads, in one-letter code: Polyribonucleotide nucleotidyltransferase (703 aa).

Mg(2+) is bound by residues Asp486 and Asp492. The 62-residue stretch at 553–614 (PRITTIWIKP…AACDAAIQMI (62 aa)) folds into the KH domain. In terms of domain architecture, S1 motif spans 624–692 (GKLYMGTVKK…KQGKIKLSRK (69 aa)).

It belongs to the polyribonucleotide nucleotidyltransferase family. It depends on Mg(2+) as a cofactor.

The protein localises to the cytoplasm. The catalysed reaction is RNA(n+1) + phosphate = RNA(n) + a ribonucleoside 5'-diphosphate. Functionally, involved in mRNA degradation. Catalyzes the phosphorolysis of single-stranded polyribonucleotides processively in the 3'- to 5'-direction. The sequence is that of Polyribonucleotide nucleotidyltransferase from Trichlorobacter lovleyi (strain ATCC BAA-1151 / DSM 17278 / SZ) (Geobacter lovleyi).